A 234-amino-acid polypeptide reads, in one-letter code: Large ribosomal subunit protein uL1 (234 aa).

The protein belongs to the universal ribosomal protein uL1 family. In terms of assembly, part of the 50S ribosomal subunit.

Binds directly to 23S rRNA. The L1 stalk is quite mobile in the ribosome, and is involved in E site tRNA release. In terms of biological role, protein L1 is also a translational repressor protein, it controls the translation of the L11 operon by binding to its mRNA. This is Large ribosomal subunit protein uL1 from Escherichia coli O127:H6 (strain E2348/69 / EPEC).